The primary structure comprises 552 residues: Arginine--tRNA ligase (552 aa).

The short motif at 123 to 133 is the 'HIGH' region element; the sequence is ANPTGPLTIGR.

This sequence belongs to the class-I aminoacyl-tRNA synthetase family. In terms of assembly, monomer.

It localises to the cytoplasm. The enzyme catalyses tRNA(Arg) + L-arginine + ATP = L-arginyl-tRNA(Arg) + AMP + diphosphate. The polypeptide is Arginine--tRNA ligase (Chlorobium luteolum (strain DSM 273 / BCRC 81028 / 2530) (Pelodictyon luteolum)).